A 292-amino-acid chain; its full sequence is 4-hydroxy-tetrahydrodipicolinate synthase (292 aa).

A pyruvate-binding site is contributed by threonine 45. Tyrosine 133 functions as the Proton donor/acceptor in the catalytic mechanism. Lysine 161 (schiff-base intermediate with substrate) is an active-site residue. Residue isoleucine 203 coordinates pyruvate.

It belongs to the DapA family. In terms of assembly, homotetramer; dimer of dimers.

It localises to the cytoplasm. The catalysed reaction is L-aspartate 4-semialdehyde + pyruvate = (2S,4S)-4-hydroxy-2,3,4,5-tetrahydrodipicolinate + H2O + H(+). It participates in amino-acid biosynthesis; L-lysine biosynthesis via DAP pathway; (S)-tetrahydrodipicolinate from L-aspartate: step 3/4. In terms of biological role, catalyzes the condensation of (S)-aspartate-beta-semialdehyde [(S)-ASA] and pyruvate to 4-hydroxy-tetrahydrodipicolinate (HTPA). The protein is 4-hydroxy-tetrahydrodipicolinate synthase of Escherichia fergusonii (strain ATCC 35469 / DSM 13698 / CCUG 18766 / IAM 14443 / JCM 21226 / LMG 7866 / NBRC 102419 / NCTC 12128 / CDC 0568-73).